We begin with the raw amino-acid sequence, 383 residues long: Arginine biosynthesis bifunctional protein ArgJ (383 aa).

Substrate-binding residues include Thr-146, Lys-168, Thr-179, Glu-259, Asn-378, and Ser-383. Thr-179 serves as the catalytic Nucleophile.

It belongs to the ArgJ family. As to quaternary structure, heterotetramer of two alpha and two beta chains.

The protein localises to the cytoplasm. The catalysed reaction is N(2)-acetyl-L-ornithine + L-glutamate = N-acetyl-L-glutamate + L-ornithine. It carries out the reaction L-glutamate + acetyl-CoA = N-acetyl-L-glutamate + CoA + H(+). Its pathway is amino-acid biosynthesis; L-arginine biosynthesis; L-ornithine and N-acetyl-L-glutamate from L-glutamate and N(2)-acetyl-L-ornithine (cyclic): step 1/1. It functions in the pathway amino-acid biosynthesis; L-arginine biosynthesis; N(2)-acetyl-L-ornithine from L-glutamate: step 1/4. Functionally, catalyzes two activities which are involved in the cyclic version of arginine biosynthesis: the synthesis of N-acetylglutamate from glutamate and acetyl-CoA as the acetyl donor, and of ornithine by transacetylation between N(2)-acetylornithine and glutamate. The polypeptide is Arginine biosynthesis bifunctional protein ArgJ (Streptomyces coelicolor (strain ATCC BAA-471 / A3(2) / M145)).